The primary structure comprises 455 residues: MSQHVSRLGGLRGRSHGHGAFGGPYHQRLRRVGRRPRRIAMLSVHTSPLHQPGTGDAGGMNVYIVELAKRLAAIDIEVEIFTRATTGTLPPTVELAPGVLVRHVDAGPYEGLAKEDLPAQLCAFTHGVMGAWAGHRPGYYDLVHSHYWLSGHVGWLAAERWRVPLVHAMHTMAKVKNAALAEGDTPEPAARVIGEEQIVGAADRLIANTEEEADELVRHYGADPELVAVVHPGVNLERFRPADGRAAARARLGLPPDALIPLFAGRIQPLKAPDILLHAVAHLLDEDPRLRERIVVPVVGGPSGSGLAKPERLHKLAARLGVSDVIRFRPPCTQDELADWYRAASVLVMPSYNESFGLVAIEAQACGTPVIAAEVGGLPVAVRDGHSGILVPGHNPADYARELHRLSADPGLLKRLGSGAAHHAERFGWDKAAAATADVYAEAMRGYRRLRSVHG.

A disordered region spans residues 1–25; sequence MSQHVSRLGGLRGRSHGHGAFGGPY. H45 is a binding site for 1D-myo-inositol 3-phosphate. UDP-N-acetyl-alpha-D-glucosamine-binding positions include 51–52 and G59; that span reads QP. 1D-myo-inositol 3-phosphate contacts are provided by residues 56-61, K114, Y147, T171, and R191; that span reads DAGGMN. UDP-N-acetyl-alpha-D-glucosamine-binding residues include R266 and K271. Residues Y341, R342, and A344 each coordinate Mg(2+). 2 residues coordinate UDP-N-acetyl-alpha-D-glucosamine: E354 and E362. T368 provides a ligand contact to Mg(2+).

It belongs to the glycosyltransferase group 1 family. MshA subfamily. In terms of assembly, homodimer.

The catalysed reaction is 1D-myo-inositol 3-phosphate + UDP-N-acetyl-alpha-D-glucosamine = 1D-myo-inositol 2-acetamido-2-deoxy-alpha-D-glucopyranoside 3-phosphate + UDP + H(+). Catalyzes the transfer of a N-acetyl-glucosamine moiety to 1D-myo-inositol 3-phosphate to produce 1D-myo-inositol 2-acetamido-2-deoxy-glucopyranoside 3-phosphate in the mycothiol biosynthesis pathway. The sequence is that of D-inositol 3-phosphate glycosyltransferase from Streptomyces bingchenggensis (strain BCW-1).